A 276-amino-acid chain; its full sequence is MANVLKEKMYDELLSATCRILKLGSHDYRITERNLLSKNPKFPLCDIILKLDYAYNLEYLLSLWEHVTKQEPRFVFKNTGGAVSMSCYLHAPVKVEGHHAVRECNILRVNECLTVRMSDIVAMKPSTFAVFTKCIIRRNRDDTYVVEFVAFGPENESEYISLLKAIFLKKCSMGKQHLESNRFCQGLRRRSSHVLEKGRFESSGKVVNKASAVVTSQESIKQFYEKEKSLLSGVKFWRLSERHCRFALVGICFLLALYFCYVLLKKTPTPASGSVV.

Over 1–245 the chain is Perinuclear space; sequence MANVLKEKMY…FWRLSERHCR (245 aa). The chain crosses the membrane as a helical span at residues 246 to 264; that stretch reads FALVGICFLLALYFCYVLL. The Nuclear segment spans residues 265-276; it reads KKTPTPASGSVV.

This sequence belongs to the herpesviridae NEC2 protein family. Forms a heterohexameric complex with NEC1. Phosphorylated.

It localises to the host nucleus inner membrane. Plays an essential role in virion nuclear egress, the first step of virion release from infected cell. Within the host nucleus, NEC1 interacts with the newly formed capsid through the vertexes and directs it to the inner nuclear membrane by associating with NEC2. Induces the budding of the capsid at the inner nuclear membrane as well as its envelopment into the perinuclear space. There, the NEC1/NEC2 complex promotes the fusion of the enveloped capsid with the outer nuclear membrane and the subsequent release of the viral capsid into the cytoplasm where it will reach the secondary budding sites in the host Golgi or trans-Golgi network. The polypeptide is Nuclear egress protein 2 (Homo sapiens (Human)).